The chain runs to 302 residues: Glutaminase (302 aa).

Residues S61, N111, E155, N162, Y186, Y238, and V256 each contribute to the substrate site.

It belongs to the glutaminase family. In terms of assembly, homotetramer.

The enzyme catalyses L-glutamine + H2O = L-glutamate + NH4(+). In Pseudomonas savastanoi pv. phaseolicola (strain 1448A / Race 6) (Pseudomonas syringae pv. phaseolicola (strain 1448A / Race 6)), this protein is Glutaminase.